Here is an 865-residue protein sequence, read N- to C-terminus: Lactose regulatory protein LAC9 (865 aa).

Residues 1–15 (MGSRASNSPSFSSKA) show a composition bias toward polar residues. A disordered region spans residues 1-87 (MGSRASNSPS…NNNNNNNKKS (87 aa)). The span at 22–34 (EYKKNAVKKETIR) shows a compositional bias: basic and acidic residues. Residues 67–85 (SNGNKNDSNANNNNNNNNK) show a composition bias toward low complexity. Residues cysteine 95, cysteine 98, cysteine 105, cysteine 112, cysteine 115, and cysteine 122 each contribute to the Zn(2+) site. Residues 95–122 (CDACRKKKWKCSKTVPTCTNCLKYNLDC) constitute a DNA-binding region (zn(2)-C6 fungal-type). Residues 818 to 840 (LQSSTTQMRPPTTSGWPDTNNFL) form a disordered region.

The protein localises to the nucleus. Functionally, positive regulatory protein, that controls induction of the lactose-galactose regulation of Kluyveromyces lactis. The polypeptide is Lactose regulatory protein LAC9 (LAC9) (Kluyveromyces lactis (strain ATCC 8585 / CBS 2359 / DSM 70799 / NBRC 1267 / NRRL Y-1140 / WM37) (Yeast)).